We begin with the raw amino-acid sequence, 165 residues long: MESDSMFIGFGYDRHPLVEGRRLVLAGVEIDAPLGSLGHSDGDVLSHAIIDALLGAGCLGDIGTWFPETKEYKDANSLDLLKETVKILEERGFSVVNVDATVVASIVKLSPYREKILENLKSALETSRVNVKFKSGNTLGFEGEERGISAYAVCLVEEKKCTKSI.

D13 and H15 together coordinate a divalent metal cation. Residues 13–15 (DRH) and 39–40 (HS) each bind 4-CDP-2-C-methyl-D-erythritol 2-phosphate. H47 serves as a coordination point for a divalent metal cation. Residues 61-63 (DIG) and F141 contribute to the 4-CDP-2-C-methyl-D-erythritol 2-phosphate site.

It belongs to the IspF family. In terms of assembly, homotrimer. A divalent metal cation is required as a cofactor.

It catalyses the reaction 4-CDP-2-C-methyl-D-erythritol 2-phosphate = 2-C-methyl-D-erythritol 2,4-cyclic diphosphate + CMP. It participates in isoprenoid biosynthesis; isopentenyl diphosphate biosynthesis via DXP pathway; isopentenyl diphosphate from 1-deoxy-D-xylulose 5-phosphate: step 4/6. Functionally, involved in the biosynthesis of isopentenyl diphosphate (IPP) and dimethylallyl diphosphate (DMAPP), two major building blocks of isoprenoid compounds. Catalyzes the conversion of 4-diphosphocytidyl-2-C-methyl-D-erythritol 2-phosphate (CDP-ME2P) to 2-C-methyl-D-erythritol 2,4-cyclodiphosphate (ME-CPP) with a corresponding release of cytidine 5-monophosphate (CMP). The polypeptide is 2-C-methyl-D-erythritol 2,4-cyclodiphosphate synthase (Thermotoga neapolitana (strain ATCC 49049 / DSM 4359 / NBRC 107923 / NS-E)).